The following is a 480-amino-acid chain: Aspartyl/glutamyl-tRNA(Asn/Gln) amidotransferase subunit B (480 aa).

The protein belongs to the GatB/GatE family. GatB subfamily. Heterotrimer of A, B and C subunits.

It carries out the reaction L-glutamyl-tRNA(Gln) + L-glutamine + ATP + H2O = L-glutaminyl-tRNA(Gln) + L-glutamate + ADP + phosphate + H(+). The enzyme catalyses L-aspartyl-tRNA(Asn) + L-glutamine + ATP + H2O = L-asparaginyl-tRNA(Asn) + L-glutamate + ADP + phosphate + 2 H(+). Allows the formation of correctly charged Asn-tRNA(Asn) or Gln-tRNA(Gln) through the transamidation of misacylated Asp-tRNA(Asn) or Glu-tRNA(Gln) in organisms which lack either or both of asparaginyl-tRNA or glutaminyl-tRNA synthetases. The reaction takes place in the presence of glutamine and ATP through an activated phospho-Asp-tRNA(Asn) or phospho-Glu-tRNA(Gln). The chain is Aspartyl/glutamyl-tRNA(Asn/Gln) amidotransferase subunit B from Streptococcus pneumoniae (strain ATCC 700669 / Spain 23F-1).